The sequence spans 250 residues: 3-deoxy-manno-octulosonate cytidylyltransferase (250 aa).

Belongs to the KdsB family.

It localises to the cytoplasm. The catalysed reaction is 3-deoxy-alpha-D-manno-oct-2-ulosonate + CTP = CMP-3-deoxy-beta-D-manno-octulosonate + diphosphate. It functions in the pathway nucleotide-sugar biosynthesis; CMP-3-deoxy-D-manno-octulosonate biosynthesis; CMP-3-deoxy-D-manno-octulosonate from 3-deoxy-D-manno-octulosonate and CTP: step 1/1. It participates in bacterial outer membrane biogenesis; lipopolysaccharide biosynthesis. Functionally, activates KDO (a required 8-carbon sugar) for incorporation into bacterial lipopolysaccharide in Gram-negative bacteria. This chain is 3-deoxy-manno-octulosonate cytidylyltransferase, found in Yersinia pseudotuberculosis serotype O:1b (strain IP 31758).